A 505-amino-acid chain; its full sequence is MARAERSVLLRLENISKEFPGVKALSNVHFDLRSGEVHAVCGENGAGKSTLMKIISGVYQPSEGTILHKGEKVQYASPLQSEAAGIAIIHQELNLVPHLSVAENIYLAREPRRGFLVDRKKLRLDAKRCLDRLGVDINPDQLVRSLSVAQCQMVEIAKALSLDAEVLIMDEPTSSLTEQETRLLFKVIRDLKASGVGIVYISHRLDEMAEIVDRVTILRDGRYISTDDFASITVDDIVTRMVGRSLEDKFPERTSRPTDDILFSVEGLTRNGVFSDVSFSLRRGEILGFAGLMGAGRTEVARAIFGADPLDAGKIVFNGRELSIGSPQDAIEEGIAYLSEDRKSDGLAIKMSVAANTTLANLGEVSNRFGLIDFKKHDDVAKRYVDLLNIRTPSIDQTVRLLSGGNQQKIIIGKWLFRQSRVLFFDEPTRGIDVGAKFAIYKIMDELAAQGIGVILISSELPEILGLTDRIAVFHQGRITGVLETAKTNQEEIMRYASGYGRAAQ.

ABC transporter domains lie at L10 to S245 and R256 to G501. G42–S49 lines the ATP pocket.

Belongs to the ABC transporter superfamily. Carbohydrate importer 2 (CUT2) (TC 3.A.1.2) family.

It is found in the cell inner membrane. The catalysed reaction is D-ribose(out) + ATP + H2O = D-ribose(in) + ADP + phosphate + H(+). It catalyses the reaction D-galactose(out) + ATP + H2O = D-galactose(in) + ADP + phosphate + H(+). Its function is as follows. Part of an ABC transporter complex involved in carbohydrate import. Could be involved in ribose, galactose and/or methyl galactoside import. Responsible for energy coupling to the transport system. In Agrobacterium fabrum (strain C58 / ATCC 33970) (Agrobacterium tumefaciens (strain C58)), this protein is Putative ribose/galactose/methyl galactoside import ATP-binding protein 1.